A 395-amino-acid polypeptide reads, in one-letter code: S-adenosylmethionine synthase (395 aa).

His16 lines the ATP pocket. A Mg(2+)-binding site is contributed by Asp18. A K(+)-binding site is contributed by Glu44. L-methionine-binding residues include Glu57 and Gln100. The flexible loop stretch occupies residues 100-110; sequence QSPDIAQGVDR. ATP is bound by residues 167–169, 233–234, Asp242, 248–249, Ala265, and Lys269; these read DAK, RF, and RK. Asp242 contributes to the L-methionine binding site. L-methionine is bound at residue Lys273.

Belongs to the AdoMet synthase family. As to quaternary structure, homotetramer; dimer of dimers. It depends on Mg(2+) as a cofactor. K(+) is required as a cofactor.

It is found in the cytoplasm. The enzyme catalyses L-methionine + ATP + H2O = S-adenosyl-L-methionine + phosphate + diphosphate. It participates in amino-acid biosynthesis; S-adenosyl-L-methionine biosynthesis; S-adenosyl-L-methionine from L-methionine: step 1/1. Catalyzes the formation of S-adenosylmethionine (AdoMet) from methionine and ATP. The overall synthetic reaction is composed of two sequential steps, AdoMet formation and the subsequent tripolyphosphate hydrolysis which occurs prior to release of AdoMet from the enzyme. The chain is S-adenosylmethionine synthase from Burkholderia mallei (strain NCTC 10247).